The chain runs to 286 residues: Bifunctional protein FolD (286 aa).

NADP(+) contacts are provided by residues 165 to 167 (GRS), S190, and V231.

Belongs to the tetrahydrofolate dehydrogenase/cyclohydrolase family. As to quaternary structure, homodimer.

The enzyme catalyses (6R)-5,10-methylene-5,6,7,8-tetrahydrofolate + NADP(+) = (6R)-5,10-methenyltetrahydrofolate + NADPH. It catalyses the reaction (6R)-5,10-methenyltetrahydrofolate + H2O = (6R)-10-formyltetrahydrofolate + H(+). The protein operates within one-carbon metabolism; tetrahydrofolate interconversion. In terms of biological role, catalyzes the oxidation of 5,10-methylenetetrahydrofolate to 5,10-methenyltetrahydrofolate and then the hydrolysis of 5,10-methenyltetrahydrofolate to 10-formyltetrahydrofolate. In Bacillus anthracis (strain A0248), this protein is Bifunctional protein FolD.